The chain runs to 317 residues: Transaldolase (317 aa).

Lys-126 serves as the catalytic Schiff-base intermediate with substrate.

The protein belongs to the transaldolase family. Type 1 subfamily. In terms of assembly, homodimer.

It localises to the cytoplasm. It carries out the reaction D-sedoheptulose 7-phosphate + D-glyceraldehyde 3-phosphate = D-erythrose 4-phosphate + beta-D-fructose 6-phosphate. It functions in the pathway carbohydrate degradation; pentose phosphate pathway; D-glyceraldehyde 3-phosphate and beta-D-fructose 6-phosphate from D-ribose 5-phosphate and D-xylulose 5-phosphate (non-oxidative stage): step 2/3. In terms of biological role, transaldolase is important for the balance of metabolites in the pentose-phosphate pathway. In Paraburkholderia xenovorans (strain LB400), this protein is Transaldolase.